The primary structure comprises 200 residues: Adenylate kinase (200 aa).

10–15 (GAGKGT) lines the ATP pocket. The interval 30–59 (STGDMLRAAVAAGTPVGLEAKAVMESGGLV) is NMP. Residues Thr-31, Arg-36, 57–59 (GLV), 85–88 (GFPR), and Gln-92 each bind AMP. The segment at 126 to 142 (KRAAETLARGQAVRKDD) is LID. Arg-127 provides a ligand contact to ATP. AMP contacts are provided by Arg-139 and Arg-150. Gln-178 provides a ligand contact to ATP.

It belongs to the adenylate kinase family. Monomer.

The protein resides in the cytoplasm. It carries out the reaction AMP + ATP = 2 ADP. It functions in the pathway purine metabolism; AMP biosynthesis via salvage pathway; AMP from ADP: step 1/1. Functionally, catalyzes the reversible transfer of the terminal phosphate group between ATP and AMP. Plays an important role in cellular energy homeostasis and in adenine nucleotide metabolism. The protein is Adenylate kinase of Methylobacterium radiotolerans (strain ATCC 27329 / DSM 1819 / JCM 2831 / NBRC 15690 / NCIMB 10815 / 0-1).